Reading from the N-terminus, the 609-residue chain is UvrABC system protein C (609 aa).

Positions 15-92 (TGSGVYQIQD…IKQFRPRYNV (78 aa)) constitute a GIY-YIG domain. One can recognise a UVR domain in the interval 202–237 (DQVIIKLTERMEVASENLVFEEAAHYRDQIRQLRRL).

The protein belongs to the UvrC family. In terms of assembly, interacts with UvrB in an incision complex.

The protein localises to the cytoplasm. The UvrABC repair system catalyzes the recognition and processing of DNA lesions. UvrC both incises the 5' and 3' sides of the lesion. The N-terminal half is responsible for the 3' incision and the C-terminal half is responsible for the 5' incision. This Coxiella burnetii (strain Dugway 5J108-111) protein is UvrABC system protein C.